The sequence spans 427 residues: Serine--tRNA ligase (427 aa).

L-serine is bound at residue 229-231 (TAE). Position 260-262 (260-262 (RSE)) interacts with ATP. E283 provides a ligand contact to L-serine. 347–350 (EISS) serves as a coordination point for ATP. Residue S383 coordinates L-serine.

Belongs to the class-II aminoacyl-tRNA synthetase family. Type-1 seryl-tRNA synthetase subfamily. In terms of assembly, homodimer. The tRNA molecule binds across the dimer.

It is found in the cytoplasm. The enzyme catalyses tRNA(Ser) + L-serine + ATP = L-seryl-tRNA(Ser) + AMP + diphosphate + H(+). It carries out the reaction tRNA(Sec) + L-serine + ATP = L-seryl-tRNA(Sec) + AMP + diphosphate + H(+). It participates in aminoacyl-tRNA biosynthesis; selenocysteinyl-tRNA(Sec) biosynthesis; L-seryl-tRNA(Sec) from L-serine and tRNA(Sec): step 1/1. Its function is as follows. Catalyzes the attachment of serine to tRNA(Ser). Is also able to aminoacylate tRNA(Sec) with serine, to form the misacylated tRNA L-seryl-tRNA(Sec), which will be further converted into selenocysteinyl-tRNA(Sec). The chain is Serine--tRNA ligase from Oleidesulfovibrio alaskensis (strain ATCC BAA-1058 / DSM 17464 / G20) (Desulfovibrio alaskensis).